We begin with the raw amino-acid sequence, 562 residues long: MTFRDILSVTFEGPRASSSTGGSGAGGGAGTVGPEGPAVGGVPGATGGSAVVGTGSGEDNQSSTAEAGAAASGEVNGSAAVGGLVVSAQGVGVGVFLAAFILTAVAGNLLVILSVACNRHLQTVTNYFIVNLAVADLLLSAAVLPFSATMEVLGFWPFGRTFCDVWAAVDVLCCTASILSLCTISVDRYVGVRHSLKYPAIMTERKAAAILALLWAVALVVSVGPLLGWKEPVPPDERFCGITEEVGYAIFSSVCSFYLPMAVIVVMYCRVYVVARSTTRSLEAGIKREPGKASEVVLRIHCRGAATSAKGNPGTQSSKGHTLRSSLSVRLLKFSREKKAAKTLAIVVGVFVLCWFPFFFVLPLGSLFPQLKPSEGVFKVIFWLGYFNSCVNPLIYPCSSREFKRAFLRLLRCQCRRRRRRLWPSLRPPLASLDRRPALRLCPQPAHRTPRGSPSPHCTPRPGLRRHAGGAGFGLRPSKASLRLREWRLLGPLQRPTTQLRAKVSSLSHKFRSGGARRAETACALRSEVEAVSLNVPQDGAEAVICQAYEPGDLSNLRETDI.

The Extracellular portion of the chain corresponds to 1 to 90; that stretch reads MTFRDILSVT…VGGLVVSAQG (90 aa). Disordered regions lie at residues 13–44 and 50–69; these read GPRA…GVPG and AVVG…EAGA. Positions 21–44 are enriched in gly residues; sequence GGSGAGGGAGTVGPEGPAVGGVPG. N-linked (GlcNAc...) asparagine glycosylation is found at Asn-60 and Asn-76. The chain crosses the membrane as a helical span at residues 91-115; the sequence is VGVGVFLAAFILTAVAGNLLVILSV. Over 116–127 the chain is Cytoplasmic; that stretch reads ACNRHLQTVTNY. The helical transmembrane segment at 128 to 153 threads the bilayer; the sequence is FIVNLAVADLLLSAAVLPFSATMEVL. The Extracellular portion of the chain corresponds to 154–163; the sequence is GFWPFGRTFC. The helical transmembrane segment at 164-186 threads the bilayer; the sequence is DVWAAVDVLCCTASILSLCTISV. Residues 187–207 lie on the Cytoplasmic side of the membrane; that stretch reads DRYVGVRHSLKYPAIMTERKA. The chain crosses the membrane as a helical span at residues 208–232; sequence AAILALLWAVALVVSVGPLLGWKEP. Residues 233 to 245 lie on the Extracellular side of the membrane; it reads VPPDERFCGITEE. A helical transmembrane segment spans residues 246-269; the sequence is VGYAIFSSVCSFYLPMAVIVVMYC. Over 270–342 the chain is Cytoplasmic; the sequence is RVYVVARSTT…KFSREKKAAK (73 aa). The helical transmembrane segment at 343 to 367 threads the bilayer; that stretch reads TLAIVVGVFVLCWFPFFFVLPLGSL. The Extracellular segment spans residues 368-374; sequence FPQLKPS. Residues 375 to 399 form a helical membrane-spanning segment; the sequence is EGVFKVIFWLGYFNSCVNPLIYPCS. The Cytoplasmic portion of the chain corresponds to 400-562; the sequence is SREFKRAFLR…DLSNLRETDI (163 aa). The S-palmitoyl cysteine moiety is linked to residue Cys-413. Residues 444 to 472 form a disordered region; it reads QPAHRTPRGSPSPHCTPRPGLRRHAGGAG.

This sequence belongs to the G-protein coupled receptor 1 family. Adrenergic receptor subfamily. ADRA1D sub-subfamily. In terms of assembly, interacts with FLNA (via filamin repeat 21); increases PKA-mediated phosphorylation of FLNA. In terms of processing, palmitoylated. Palmitoylation by ZDHHC21 may increase the expression of the receptor and regulate downstream signaling.

The protein localises to the cell membrane. This alpha-adrenergic receptor mediates its effect through the influx of extracellular calcium. This is Alpha-1D adrenergic receptor (Adra1d) from Mus musculus (Mouse).